Here is a 126-residue protein sequence, read N- to C-terminus: Small ribosomal subunit protein uS11 (126 aa).

It belongs to the universal ribosomal protein uS11 family. In terms of assembly, part of the 30S ribosomal subunit. Interacts with proteins S7 and S18. Binds to IF-3.

Its function is as follows. Located on the platform of the 30S subunit, it bridges several disparate RNA helices of the 16S rRNA. Forms part of the Shine-Dalgarno cleft in the 70S ribosome. The chain is Small ribosomal subunit protein uS11 from Ehrlichia chaffeensis (strain ATCC CRL-10679 / Arkansas).